The chain runs to 245 residues: Adenylate kinase (245 aa).

15-20 (GSGKGT) is an ATP binding site. The interval 35-64 (SSGDLLRGAVSKDTPLSQEIKSYLDQGKLL) is NMP. AMP contacts are provided by residues serine 36, arginine 41, 62-64 (KLL), 103-106 (GFPR), and glutamine 110. Positions 143–176 (SRYICPACQGIYNEQQGFSSCPKCSVELIRRSDD) are LID. Arginine 144 lines the ATP pocket. Zn(2+)-binding residues include cysteine 147 and cysteine 150. 153 to 154 (IY) is an ATP binding site. Positions 163 and 166 each coordinate Zn(2+). Residues arginine 173 and arginine 184 each coordinate AMP. Position 212 (alanine 212) interacts with ATP.

It belongs to the adenylate kinase family. As to quaternary structure, monomer.

Its subcellular location is the cytoplasm. The catalysed reaction is AMP + ATP = 2 ADP. Its pathway is purine metabolism; AMP biosynthesis via salvage pathway; AMP from ADP: step 1/1. Its function is as follows. Catalyzes the reversible transfer of the terminal phosphate group between ATP and AMP. Plays an important role in cellular energy homeostasis and in adenine nucleotide metabolism. This chain is Adenylate kinase, found in Chlamydia trachomatis serovar L2 (strain ATCC VR-902B / DSM 19102 / 434/Bu).